Reading from the N-terminus, the 1132-residue chain is Cytospin-A (1132 aa).

Residues methionine 1 to lysine 166 are disordered. Low complexity-rich tracts occupy residues serine 73–serine 109 and serine 119–serine 129. Residues serine 150–serine 159 are compositionally biased toward basic and acidic residues. A coiled-coil region spans residues aspartate 226–glutamine 268. The segment at alanine 301–glutamate 381 is disordered. Positions serine 333 to aspartate 343 are enriched in polar residues. The span at alanine 348 to glycine 377 shows a compositional bias: low complexity. Coiled coils occupy residues alanine 385–leucine 440 and arginine 478–valine 798. Disordered regions lie at residues threonine 869 to valine 895 and serine 939 to proline 1016. A compositionally biased stretch (pro residues) spans alanine 875 to threonine 889. A compositionally biased stretch (polar residues) spans glutamine 946–arginine 961. The segment covering arginine 962–serine 972 has biased composition (basic and acidic residues). Residues alanine 979–serine 1000 are compositionally biased toward low complexity. A Calponin-homology (CH) domain is found at glycine 1026–glutamate 1131.

It belongs to the cytospin-A family. As to quaternary structure, may interact with both microtubules and actin cytoskeleton.

The protein resides in the cytoplasm. The protein localises to the cytoskeleton. It is found in the spindle. It localises to the cell junction. Its subcellular location is the gap junction. Its function is as follows. Involved in cytokinesis and spindle organization. May play a role in actin cytoskeleton organization and microtubule stabilization and hence required for proper cell adhesion and migration. The polypeptide is Cytospin-A (specc1la) (Danio rerio (Zebrafish)).